A 408-amino-acid polypeptide reads, in one-letter code: Argininosuccinate synthase (408 aa).

Residue 14–22 (AYSGGLDTS) participates in ATP binding. L-citrulline-binding residues include tyrosine 92 and serine 97. Glycine 122 contacts ATP. L-aspartate is bound by residues threonine 124, asparagine 128, and aspartate 129. Residue asparagine 128 coordinates L-citrulline. L-citrulline-binding residues include arginine 132, serine 181, serine 190, glutamate 266, and tyrosine 278.

The protein belongs to the argininosuccinate synthase family. Type 1 subfamily. As to quaternary structure, homotetramer.

The protein resides in the cytoplasm. The catalysed reaction is L-citrulline + L-aspartate + ATP = 2-(N(omega)-L-arginino)succinate + AMP + diphosphate + H(+). It functions in the pathway amino-acid biosynthesis; L-arginine biosynthesis; L-arginine from L-ornithine and carbamoyl phosphate: step 2/3. The chain is Argininosuccinate synthase from Moorella thermoacetica (strain ATCC 39073 / JCM 9320).